Here is a 370-residue protein sequence, read N- to C-terminus: tRNA N(3)-cytidine methyltransferase METTL2 (370 aa).

Positions 72, 76, 181, 206, 232, 233, and 253 each coordinate S-adenosyl-L-methionine.

This sequence belongs to the methyltransferase superfamily. METL family. Monomer.

The protein localises to the cytoplasm. The catalysed reaction is cytidine(32) in tRNA(Thr) + S-adenosyl-L-methionine = N(3)-methylcytidine(32) in tRNA(Thr) + S-adenosyl-L-homocysteine + H(+). It catalyses the reaction cytidine(32) in tRNA(Arg)(CCU) + S-adenosyl-L-methionine = N(3)-methylcytidine(32) in tRNA(Arg)(CCU) + S-adenosyl-L-homocysteine + H(+). In terms of biological role, S-adenosyl-L-methionine-dependent methyltransferase that mediates N(3)-methylcytidine modification of residue 32 of the tRNA anticodon loop of tRNA(Thr)(UGU) and tRNA(Arg)(CCU). N(3)-methylcytidine methylation by METTL2 requires the N6-threonylcarbamoylation of tRNA (t6A37) by the EKC/KEOPS complex as prerequisite. The polypeptide is tRNA N(3)-cytidine methyltransferase METTL2 (METTL2) (Gallus gallus (Chicken)).